Here is a 288-residue protein sequence, read N- to C-terminus: dTDP-4-keto-6-deoxy-D-glucose reductase (288 aa).

Residues 12-14 (GML), 38-39 (DI), 62-64 (AWT), Tyr-127, and Lys-131 contribute to the NADH site. Residues 13–14 (ML), 38–39 (DI), 62–64 (AWT), Tyr-127, and Lys-131 each bind NADPH. The active-site Proton donor/acceptor is the Tyr-127.

The protein belongs to the dTDP-4-dehydrorhamnose reductase family. The cofactor is Mg(2+).

The protein operates within antibiotic biosynthesis; novobiocin biosynthesis. Functionally, reduces the product formed from the reaction of NovW with dTDP-4-keto-6-deoxy-D-glucose to result in dTDP-5-methyl-L-rhamnose in the novobiocin biosynthesis pathway, an aminocoumarin family antibiotic that targets bacterial DNA gyrases. The protein is dTDP-4-keto-6-deoxy-D-glucose reductase (novS) of Streptomyces niveus (Streptomyces spheroides).